Consider the following 731-residue polypeptide: Small conductance calcium-activated potassium channel protein 3 (731 aa).

Residues 1 to 11 (MDTSGHFHDSG) show a composition bias toward basic and acidic residues. 2 disordered regions span residues 1-170 (MDTS…SNPF) and 239-258 (ATHNHQHAGTTASSTTFPKA). Residues 30-40 (QQQQQQQQQQQ) show a composition bias toward low complexity. Pro residues predominate over residues 41–51 (QPPPPAPPAAP). Residues 52 to 95 (QQPLGPSLQPQPPQLQQQQQQQQQQQQQQPPHPLSQLAQLQSQP) are compositionally biased toward low complexity. The span at 112–132 (PSSNSTAILHPSSRQGSQLNL) shows a compositional bias: polar residues. Low complexity predominate over residues 138 to 147 (GHSPSSTATS). Residue S167 is modified to Phosphoserine. The segment covering 239–256 (ATHNHQHAGTTASSTTFP) has biased composition (polar residues). A helical transmembrane segment spans residues 288–308 (LIFGMFGIVVMVIETELSWGL). Residues 315 to 335 (FSLALKCLISLSTIILLGLII) form a helical membrane-spanning segment. Residues 366–386 (ISLEMLVCAIHPIPGEYKFFW) traverse the membrane as a helical segment. Residues 405–425 (IILSIPMFLRLYLIARVMLLH) form a helical membrane-spanning segment. The helical transmembrane segment at 454–474 (LMTICPGTVLLVFSISLWIIA) threads the bilayer. The pore-forming intramembrane region spans 494–514 (FLGAMWLISITFLSIGYGDMV). A helical membrane pass occupies residues 523–543 (VCLLTGIMGAGCTALVVAVVA). A calmodulin-binding region spans residues 561–637 (DTQLTKRIKN…LVDLSKMQNV (77 aa)). A coiled-coil region spans residues 642 to 669 (ITELNDRSEDLEKQIGSLESKLEHLTAS). The disordered stretch occupies residues 709–731 (ISDSPIGVSSTSFPTPYTSSSSC). Residues 717-731 (SSTSFPTPYTSSSSC) are compositionally biased toward low complexity.

It belongs to the potassium channel KCNN family. KCa2.3/KCNN3 subfamily. As to quaternary structure, homodimer. Heteromultimer with KCNN2 or KCNN1; this modulates plasma membrane expression and consequently the small conductance calcium-activated potassium channel activity. The complex is composed of 4 channel subunits each of which binds to a calmodulin subunit which regulates the channel activity through calcium-binding. Interacts with CALM1. Widely distributed in human tissues and is present at 20-60% of KCNN3 in the brain.

It localises to the cell membrane. The protein localises to the cytoplasm. It is found in the myofibril. Its subcellular location is the sarcomere. The protein resides in the z line. The catalysed reaction is K(+)(in) = K(+)(out). Its activity is regulated as follows. Inhibited by bee venom neurotoxin apamin. Small conductance calcium-activated potassium channel that mediates the voltage-independent transmembrane transfer of potassium across the cell membrane through a constitutive interaction with calmodulin which binds the intracellular calcium allowing its opening. The current is characterized by a voltage-independent activation, an intracellular calcium concentration increase-dependent activation and a single-channel conductance of 10 picosiemens. Also presents an inwardly rectifying current, thus reducing its already small outward conductance of potassium ions, which is particularly the case when the membrane potential displays positive values, above + 20 mV. Activation is followed by membrane hyperpolarization. Thought to regulate neuronal excitability by contributing to the slow component of synaptic afterhyperpolarization. Functionally, does not function as a small conductance calcium-activated potassium channel. Selectively suppresses endogenous KCNN3 currents, in a dominant-negative fashion by decreasing the abundance of functional channels in the plasma membrane, possibly by selectively coassembling with and sequestering native KCNN3 protein in intracellular compartments. This dominant inhibitory effect extends to other members of the SK subfamily. This is Small conductance calcium-activated potassium channel protein 3 from Homo sapiens (Human).